Consider the following 231-residue polypeptide: 7-cyano-7-deazaguanine synthase (231 aa).

8–18 (FSGGQDSTTCL) contacts ATP. The Zn(2+) site is built by C188, C197, C200, and C203.

This sequence belongs to the QueC family. The cofactor is Zn(2+).

The enzyme catalyses 7-carboxy-7-deazaguanine + NH4(+) + ATP = 7-cyano-7-deazaguanine + ADP + phosphate + H2O + H(+). It functions in the pathway purine metabolism; 7-cyano-7-deazaguanine biosynthesis. Catalyzes the ATP-dependent conversion of 7-carboxy-7-deazaguanine (CDG) to 7-cyano-7-deazaguanine (preQ(0)). This chain is 7-cyano-7-deazaguanine synthase, found in Salmonella paratyphi B (strain ATCC BAA-1250 / SPB7).